The sequence spans 210 residues: Glycerol-3-phosphate acyltransferase (210 aa).

The next 5 helical transmembrane spans lie at 10 to 30 (ALIL…GIVI), 59 to 79 (PAAL…VLIA), 87 to 107 (AAQL…WLGF), 116 to 136 (FLGT…LTWL), and 161 to 181 (LLLG…LIFI).

This sequence belongs to the PlsY family. Probably interacts with PlsX.

It is found in the cell inner membrane. The enzyme catalyses an acyl phosphate + sn-glycerol 3-phosphate = a 1-acyl-sn-glycero-3-phosphate + phosphate. It functions in the pathway lipid metabolism; phospholipid metabolism. Its function is as follows. Catalyzes the transfer of an acyl group from acyl-phosphate (acyl-PO(4)) to glycerol-3-phosphate (G3P) to form lysophosphatidic acid (LPA). This enzyme utilizes acyl-phosphate as fatty acyl donor, but not acyl-CoA or acyl-ACP. The protein is Glycerol-3-phosphate acyltransferase of Cereibacter sphaeroides (strain ATCC 17025 / ATH 2.4.3) (Rhodobacter sphaeroides).